A 170-amino-acid chain; its full sequence is Cathelicidin antimicrobial peptide (170 aa).

Residues 1 to 30 form the signal peptide; sequence MKTQRDGPSLGRWSLLLLLLGLTMPLAVIG. Residues 31–131 constitute a propeptide, cathelin-like domain (CLD); that stretch reads RVLSYQEAVL…DISCDKDKRK (101 aa). The tract at residues 31-131 is cathelin-like domain (CLD); the sequence is RVLSYQEAVL…DISCDKDKRK (101 aa). Disulfide bonds link cysteine 86/cysteine 97 and cysteine 108/cysteine 125. Residues 150–162 are active core; the sequence is LKKIGQKIKDFFG.

This sequence belongs to the cathelicidin family. As to quaternary structure, monomer, homodimer or homotrimer (in vitro). Oligomerizes as tetra- or hexamer in solution (in vitro). In terms of processing, proteolytically cleaved by proteinase PRTN3 into antibacterial peptide LL-37. Proteolytically cleaved by cathepsin CTSG and neutrophil elastase ELANE. Resistant to proteolytic degradation in solution, and when bound to both zwitterionic (mimicking mammalian membranes) and negatively charged membranes (mimicking bacterial membranes). Post-translationally, after secretion onto the skin surface, the CAMP gene product is processed by a serine protease-dependent mechanism into multiple novel antimicrobial peptides distinct from and shorter than cathelicidin LL-37. These peptides show enhanced antimicrobial action, acquiring the ability to kill skin pathogens such as S.aureus, E.coli and C.albicans. These peptides have lost the ability to stimulate CXCL8/IL8 release from keratinocytes. The peptides act synergistically, killing bacteria at lower concentrations when present together, and maintain activity at increased salt condition.

It localises to the secreted. Its subcellular location is the vesicle. Antimicrobial protein that is an integral component of the innate immune system. Binds to bacterial lipopolysaccharides (LPS). Acts via neutrophil N-formyl peptide receptors to enhance the release of CXCL2. Postsecretory processing generates multiple cathelicidin antimicrobial peptides with various lengths which act as a topical antimicrobial defense in sweat on skin. The unprocessed precursor form, cathelicidin antimicrobial peptide, inhibits the growth of Gram-negative E.coli and E.aerogenes with efficiencies comparable to that of the mature peptide LL-37 (in vitro). Functionally, antimicrobial peptide that is an integral component of the innate immune system. Binds to bacterial lipopolysaccharides (LPS). Causes membrane permeabilization by forming transmembrane pores (in vitro). Causes lysis of E.coli. Exhibits antimicrobial activity against Gram-negative bacteria such as P.aeruginosa, S.typhimurium, E.aerogenes, E.coli and P.syringae, Gram-positive bacteria such as L.monocytogenes, S.epidermidis, S.pyogenes and S.aureus, as well as vancomycin-resistant enterococci (in vitro). Exhibits antimicrobial activity against methicillin-resistant S.aureus, P.mirabilis, and C.albicans in low-salt media, but not in media containing 100 mM NaCl (in vitro). Forms chiral supramolecular assemblies with quinolone signal (PQS) molecules of P.aeruginosa, which may lead to interference of bacterial quorum signaling and perturbance of bacterial biofilm formation. May form supramolecular fiber-like assemblies on bacterial membranes. Induces cytokine and chemokine producation as well as TNF/TNFA and CSF2/GMCSF production in normal human keratinocytes. Exhibits hemolytic activity against red blood cells. In terms of biological role, exhibits antimicrobial activity against E.coli and B.megaterium (in vitro). This is Cathelicidin antimicrobial peptide from Saguinus oedipus (Cotton-top tamarin).